We begin with the raw amino-acid sequence, 221 residues long: Thiamine-phosphate synthase (221 aa).

4-amino-2-methyl-5-(diphosphooxymethyl)pyrimidine contacts are provided by residues 49–53 (QFREK) and Asn85. The Mg(2+) site is built by Asp86 and Asp105. Ser124 lines the 4-amino-2-methyl-5-(diphosphooxymethyl)pyrimidine pocket. A 2-[(2R,5Z)-2-carboxy-4-methylthiazol-5(2H)-ylidene]ethyl phosphate-binding site is contributed by 151–153 (TQS). Lys154 provides a ligand contact to 4-amino-2-methyl-5-(diphosphooxymethyl)pyrimidine. Residues Gly183 and 203–204 (IS) each bind 2-[(2R,5Z)-2-carboxy-4-methylthiazol-5(2H)-ylidene]ethyl phosphate.

Belongs to the thiamine-phosphate synthase family. Mg(2+) serves as cofactor.

It catalyses the reaction 2-[(2R,5Z)-2-carboxy-4-methylthiazol-5(2H)-ylidene]ethyl phosphate + 4-amino-2-methyl-5-(diphosphooxymethyl)pyrimidine + 2 H(+) = thiamine phosphate + CO2 + diphosphate. The enzyme catalyses 2-(2-carboxy-4-methylthiazol-5-yl)ethyl phosphate + 4-amino-2-methyl-5-(diphosphooxymethyl)pyrimidine + 2 H(+) = thiamine phosphate + CO2 + diphosphate. The catalysed reaction is 4-methyl-5-(2-phosphooxyethyl)-thiazole + 4-amino-2-methyl-5-(diphosphooxymethyl)pyrimidine + H(+) = thiamine phosphate + diphosphate. The protein operates within cofactor biosynthesis; thiamine diphosphate biosynthesis; thiamine phosphate from 4-amino-2-methyl-5-diphosphomethylpyrimidine and 4-methyl-5-(2-phosphoethyl)-thiazole: step 1/1. Functionally, condenses 4-methyl-5-(beta-hydroxyethyl)thiazole monophosphate (THZ-P) and 2-methyl-4-amino-5-hydroxymethyl pyrimidine pyrophosphate (HMP-PP) to form thiamine monophosphate (TMP). The polypeptide is Thiamine-phosphate synthase (Histophilus somni (strain 129Pt) (Haemophilus somnus)).